The chain runs to 474 residues: MSSPVVTRFAPSPTGFLHIGGARTALFNWLYARRFGGRMLLRIEDTDRERSTQGAIDAILDGMRWLGLDWDGEVIYQFARAERHREVAESLLASGNAYHCYASAEELAQMRETARAEGRAPRYDGRWRDRDPSEAPEGVKPVIRLRAPSEGETVVEDAVQGRVTWANRDLDDLVLLRSDGTPTYMLAVVVDDHDMGVTQVIRGDDHLTNAARQSQIYRALGWDVPAMAHIPLIHGADGAKLSKRHGALGVEEYRDRGYLPAALRNYLVRLGWSHGDQEVFSTEEMIAAFDLKAIGRSAARFDFTKLESLNGLYIRGSADSVLVDAIDAILPARGPERGLPTALTPDLREKLVSAMPGLKERAKTLVELLDSAYYLYAPRPLALDAKAEALLAGDAPERLRALLPALEALPDWNAATTEAAVRQFADSQGVKLGQVAQPLRAALTGRATSPPVFDVLAVLGRDEALARLRDRLPA.

The 'HIGH' region signature appears at P11–G21. A compositionally biased stretch (basic and acidic residues) spans T113–S133. Positions T113 to P136 are disordered. Positions K240–R244 match the 'KMSKS' region motif. K243 contributes to the ATP binding site.

This sequence belongs to the class-I aminoacyl-tRNA synthetase family. Glutamate--tRNA ligase type 1 subfamily. In terms of assembly, monomer.

It is found in the cytoplasm. It carries out the reaction tRNA(Glu) + L-glutamate + ATP = L-glutamyl-tRNA(Glu) + AMP + diphosphate. Its function is as follows. Catalyzes the attachment of glutamate to tRNA(Glu) in a two-step reaction: glutamate is first activated by ATP to form Glu-AMP and then transferred to the acceptor end of tRNA(Glu). The sequence is that of Glutamate--tRNA ligase 1 from Methylorubrum extorquens (strain PA1) (Methylobacterium extorquens).